A 2155-amino-acid chain; its full sequence is Alpha-tectorin (2155 aa).

The N-terminal stretch at 1-24 (MNYSSLLRIWVSFIFALVRHQAQP) is a signal peptide. N-linked (GlcNAc...) asparagine glycosylation is found at N34, N187, N215, N278, N455, N506, N528, and N560. An NIDO domain is found at 98–252 (PFWADVHNGI…GRWAFKVDGK (155 aa)). The 55-residue stretch at 260–314 (CTSRGQFLRRGEVFWDDLNCTIKCRCLDFNNEIYCQEASCSPYEVCEPKGRFFYC) folds into the VWFC domain. In terms of domain architecture, VWFD 1 spans 320-500 (STCVVFGEPH…RVYHADWKCG (181 aa)). 2 cysteine pairs are disulfide-bonded: C322–C461 and C344–C499. Residues 597 to 650 (CPSFSHYSVCTSSCPDTCSDLTASQNCATPCTEGCECNEGFVLSTSQCVPLHKC) enclose the TIL 1 domain. N670, N687, N813, N843, N855, N898, N920, N931, and N949 each carry an N-linked (GlcNAc...) asparagine glycan. Residues 711 to 886 (TVCLLSQNQV…SWTTFEEICN (176 aa)) enclose the VWFD 2 domain. C713 and C849 are joined by a disulfide. The TIL 2 domain occupies 984–1036 (CPENSHFEECMTCTETCETLALGPICVDSCSEGCQCDEGYALQGSQCVPRSEC). N-linked (GlcNAc...) asparagine glycans are attached at residues N1048, N1064, N1235, and N1364. Positions 1098 to 1278 (ASCIVSGYGH…SWVKRDTFCQ (181 aa)) constitute a VWFD 3 domain. Disulfide bonds link C1100–C1241 and C1122–C1277. A TIL 3 domain is found at 1372-1425 (CPPNSHYESCVSVCQPRCAAIRLKSDCNHYCVEGCQCDAGYVLNGKSCILPHNC). The 182-residue stretch at 1485–1666 (SYCLAAGGGV…QKRPLAPSCN (182 aa)) folds into the VWFD 4 domain. Intrachain disulfides connect C1487–C1622, C1509–C1665, C1717–C1775, C1741–C1784, C1786–C1818, C1806–C1898, and C1837–C1857. N-linked (GlcNAc...) asparagine glycans are attached at residues N1538, N1565, N1756, N1772, N1794, N1851, N1864, N1880, N1920, and N1939. A ZP domain is found at 1805 to 2059 (TCKAAQMEVS…YSCKINCPQN (255 aa)). 3 cysteine pairs are disulfide-bonded: C1980-C2040, C2001-C2056, and C2045-C2052. N2091 carries the GPI-anchor amidated asparagine lipid modification. Residues 2092–2155 (GGCEQICTSR…HLIYKSGATS (64 aa)) constitute a propeptide, removed in mature form.

May form homomeric filament after self-association or heteromeric filament after association with beta-tectorin. Interacts with CEACAM16. Post-translationally, 3 products of tectorin seem to exist: HMM, MMM and LMM. They may be generated by active processing or the result of proteolysis occurring between intrachain disulfide bonds. The presence of a hydrophobic C-terminus preceded by a potential cleavage site strongly suggests that tectorins are synthesized as glycosylphosphatidylinositol-linked, membrane-bound precursors. Tectorins are targeted to the apical surface of the inner ear epithelia by the lipid and proteolytically released into the extracellular compartment. Cochlea-specific.

It localises to the cell membrane. The protein resides in the secreted. The protein localises to the extracellular space. Its subcellular location is the extracellular matrix. Functionally, one of the major non-collagenous components of the tectorial membrane. The tectorial membrane is an extracellular matrix of the inner ear that covers the neuroepithelium of the cochlea and contacts the stereocilia bundles of specialized sensory hair cells. Sound induces movement of these hair cells relative to the tectorial membrane, deflects the stereocilia and leads to fluctuations in hair-cell membrane potential, transducing sound into electrical signals. In Mus musculus (Mouse), this protein is Alpha-tectorin (Tecta).